Here is a 243-residue protein sequence, read N- to C-terminus: Ribonuclease 3 (243 aa).

Residues 19-144 (FNTLHKLLGF…LVGAIYLDRG (126 aa)) form the RNase III domain. A Mg(2+)-binding site is contributed by E61. Residue D65 is part of the active site. Residues N130 and E133 each contribute to the Mg(2+) site. Residue E133 is part of the active site. Positions 172-240 (SYKSLLIEWC…SKRAYYALQN (69 aa)) constitute a DRBM domain.

Belongs to the ribonuclease III family. Homodimer. Requires Mg(2+) as cofactor.

The protein resides in the cytoplasm. It carries out the reaction Endonucleolytic cleavage to 5'-phosphomonoester.. Its function is as follows. Digests double-stranded RNA. Involved in the processing of primary rRNA transcript to yield the immediate precursors to the large and small rRNAs (23S and 16S). Processes some mRNAs, and tRNAs when they are encoded in the rRNA operon. Processes pre-crRNA and tracrRNA of type II CRISPR loci if present in the organism. The sequence is that of Ribonuclease 3 (rnc) from Zunongwangia profunda (strain DSM 18752 / CCTCC AB 206139 / SM-A87) (Wangia profunda).